We begin with the raw amino-acid sequence, 514 residues long: Type-2 serine--tRNA ligase (514 aa).

Alanine 313 serves as a coordination point for L-serine. Cysteine 315 serves as a coordination point for Zn(2+). Arginine 344 lines the L-serine pocket. ATP-binding positions include 344–346 (RWE) and 355–356 (RV). 361–363 (RGE) is an L-serine binding site. Zn(2+)-binding residues include glutamate 363 and cysteine 470. Arginine 477 provides a ligand contact to ATP.

It belongs to the class-II aminoacyl-tRNA synthetase family. Type-2 seryl-tRNA synthetase subfamily. Homodimer. The cofactor is Zn(2+).

The protein resides in the cytoplasm. The enzyme catalyses tRNA(Ser) + L-serine + ATP = L-seryl-tRNA(Ser) + AMP + diphosphate + H(+). It catalyses the reaction tRNA(Sec) + L-serine + ATP = L-seryl-tRNA(Sec) + AMP + diphosphate + H(+). The protein operates within aminoacyl-tRNA biosynthesis; selenocysteinyl-tRNA(Sec) biosynthesis; L-seryl-tRNA(Sec) from L-serine and tRNA(Sec): step 1/1. Functionally, catalyzes the attachment of serine to tRNA(Ser). Is also able to aminoacylate tRNA(Sec) with serine, to form the misacylated tRNA L-seryl-tRNA(Sec), which will be further converted into selenocysteinyl-tRNA(Sec). The polypeptide is Type-2 serine--tRNA ligase (Methanococcus maripaludis (strain C7 / ATCC BAA-1331)).